The following is a 354-amino-acid chain: Ferrochelatase (354 aa).

2 residues coordinate Fe cation: His-214 and Glu-295.

It belongs to the ferrochelatase family.

The protein resides in the cytoplasm. It carries out the reaction heme b + 2 H(+) = protoporphyrin IX + Fe(2+). It participates in porphyrin-containing compound metabolism; protoheme biosynthesis; protoheme from protoporphyrin-IX: step 1/1. Catalyzes the ferrous insertion into protoporphyrin IX. This is Ferrochelatase from Burkholderia orbicola (strain MC0-3).